The sequence spans 331 residues: UPF0194 membrane protein YbhG (331 aa).

A signal peptide spans 1–19 (MKKPVVIGLAIAAIVAVIA). Residues 107–208 (EEIAQAAAAV…LDLQDTTLIA (102 aa)) adopt a coiled-coil conformation.

It belongs to the UPF0194 family.

The protein resides in the periplasm. This chain is UPF0194 membrane protein YbhG, found in Salmonella paratyphi A (strain ATCC 9150 / SARB42).